We begin with the raw amino-acid sequence, 121 residues long: uncharacterized protein (121 aa).

The tract at residues 101 to 121 (TVVKKEDVRESPVDTFMENAT) is disordered. Residues 102–112 (VVKKEDVRESP) are compositionally biased toward basic and acidic residues.

This is an uncharacterized protein from Schizosaccharomyces pombe (strain 972 / ATCC 24843) (Fission yeast).